A 355-amino-acid polypeptide reads, in one-letter code: S-adenosylmethionine:tRNA ribosyltransferase-isomerase (355 aa).

Belongs to the QueA family. Monomer.

It localises to the cytoplasm. It carries out the reaction 7-aminomethyl-7-carbaguanosine(34) in tRNA + S-adenosyl-L-methionine = epoxyqueuosine(34) in tRNA + adenine + L-methionine + 2 H(+). It participates in tRNA modification; tRNA-queuosine biosynthesis. Its function is as follows. Transfers and isomerizes the ribose moiety from AdoMet to the 7-aminomethyl group of 7-deazaguanine (preQ1-tRNA) to give epoxyqueuosine (oQ-tRNA). The polypeptide is S-adenosylmethionine:tRNA ribosyltransferase-isomerase (Burkholderia ambifaria (strain MC40-6)).